The following is a 490-amino-acid chain: Calcium-dependent protein kinase 12 (490 aa).

A Protein kinase domain is found at 22–280; it reads YFLGQVLGQG…AHQVLCHPWI (259 aa). ATP contacts are provided by residues 28–36 and lysine 51; that span reads LGQGQFGTT. Residue aspartate 146 is the Proton acceptor of the active site. At serine 186 the chain carries Phosphoserine. Residues 286 to 316 form an autoinhibitory domain region; it reads APDKPLDCAVVSRLKKFSAMNKLKKMALRVI. EF-hand domains lie at 323 to 358, 359 to 394, 395 to 430, and 434 to 464; these read EEIGGLKELFKMIDTDKSGTITFEELKDSMRRVGSE, LMESEIQELLRAADVDESGTIDYGEFLAATIHLNKL, EREENLVAAFSFFDKDASGYITIEELQQAWKEFGIN, and LDEMIKDIDQDNDGQIDYGEFVAMMRKGNGT. 20 residues coordinate Ca(2+): aspartate 336, aspartate 338, serine 340, threonine 342, glutamate 347, aspartate 372, aspartate 374, serine 376, threonine 378, glutamate 383, aspartate 408, aspartate 410, serine 412, tyrosine 414, glutamate 419, aspartate 442, aspartate 444, aspartate 446, glutamine 448, and glutamate 453.

It belongs to the protein kinase superfamily. Ser/Thr protein kinase family. CDPK subfamily. In terms of assembly, interacts weakly with DI19. In terms of tissue distribution, ubiquitously expressed.

The catalysed reaction is L-seryl-[protein] + ATP = O-phospho-L-seryl-[protein] + ADP + H(+). The enzyme catalyses L-threonyl-[protein] + ATP = O-phospho-L-threonyl-[protein] + ADP + H(+). Activated by calcium. Autophosphorylation may play an important role in the regulation of the kinase activity. Functionally, may play a role in signal transduction pathways that involve calcium as a second messenger. The polypeptide is Calcium-dependent protein kinase 12 (CPK12) (Arabidopsis thaliana (Mouse-ear cress)).